Consider the following 279-residue polypeptide: Protein PHOTOPERIODIC CONTROL OF HYPOCOTYL 1-LIKE (279 aa).

As to quaternary structure, interacts with light-activated phyB. Binds directly to PIF1 and COP1. In terms of processing, ubiquitinated by COP1 in darkness; this leads to proteasomal degradation. Mainly expressed in cotyledons, hypocotyls, leaves.

The protein resides in the nucleus. Its function is as follows. Together with PCH1, regulates growth and development adaptation to the ambient environment by controlling negatively phytochrome B (phyB) dark reversion, a temperature-dependent thermal relaxation process during which phyB reverts from the active to the inactive state. Contributes to red (R) light-triggered photomorphogenesis. Promotes various light responses such as seed germination, hypocotyl gravitropism and chlorophyll biosynthesis, via direct interaction with PIF1 and COP1. Prevents DNA-binding ability of PIF1 to negatively regulate the expressions of its target genes. Facilitates the physical interaction between phyB and PIF1 and the subsequent light-induced degradation of PIF1. The polypeptide is Protein PHOTOPERIODIC CONTROL OF HYPOCOTYL 1-LIKE (Arabidopsis thaliana (Mouse-ear cress)).